Here is a 233-residue protein sequence, read N- to C-terminus: Biosynthetic peptidoglycan transglycosylase (233 aa).

Residues 8 to 28 traverse the membrane as a helical segment; the sequence is LIALPVGIFIFFNAYVYGNII.

This sequence belongs to the glycosyltransferase 51 family.

The protein localises to the cell inner membrane. The enzyme catalyses [GlcNAc-(1-&gt;4)-Mur2Ac(oyl-L-Ala-gamma-D-Glu-L-Lys-D-Ala-D-Ala)](n)-di-trans,octa-cis-undecaprenyl diphosphate + beta-D-GlcNAc-(1-&gt;4)-Mur2Ac(oyl-L-Ala-gamma-D-Glu-L-Lys-D-Ala-D-Ala)-di-trans,octa-cis-undecaprenyl diphosphate = [GlcNAc-(1-&gt;4)-Mur2Ac(oyl-L-Ala-gamma-D-Glu-L-Lys-D-Ala-D-Ala)](n+1)-di-trans,octa-cis-undecaprenyl diphosphate + di-trans,octa-cis-undecaprenyl diphosphate + H(+). The protein operates within cell wall biogenesis; peptidoglycan biosynthesis. Peptidoglycan polymerase that catalyzes glycan chain elongation from lipid-linked precursors. The protein is Biosynthetic peptidoglycan transglycosylase of Neisseria meningitidis serogroup C / serotype 2a (strain ATCC 700532 / DSM 15464 / FAM18).